A 310-amino-acid polypeptide reads, in one-letter code: Olfactory receptor 8B12 (310 aa).

The Extracellular segment spans residues M1–I24. N5 is a glycosylation site (N-linked (GlcNAc...) asparagine). The helical transmembrane segment at P25–I45 threads the bilayer. At T46–H53 the chain is on the cytoplasmic side. Residues L54–T74 traverse the membrane as a helical segment. Over T75–T98 the chain is Extracellular. C96 and C188 are joined by a disulfide. The chain crosses the membrane as a helical span at residues Q99 to Y119. At D120–Q138 the chain is on the cytoplasmic side. A helical transmembrane segment spans residues V139–T159. At G160–L196 the chain is on the extracellular side. N-linked (GlcNAc...) asparagine glycans are attached at residues N164 and N189. Residues V197–S216 traverse the membrane as a helical segment. Topologically, residues Y217–A236 are cytoplasmic. The helical transmembrane segment at F237 to M257 threads the bilayer. Over Y258 to G270 the chain is Extracellular. The chain crosses the membrane as a helical span at residues K271–L291. The Cytoplasmic segment spans residues R292 to S310.

The protein belongs to the G-protein coupled receptor 1 family.

Its subcellular location is the cell membrane. In terms of biological role, odorant receptor. The chain is Olfactory receptor 8B12 (OR8B12) from Homo sapiens (Human).